The chain runs to 118 residues: Alpha-amylase inhibitor 4 (118 aa).

4 disulfide bridges follow: cysteine 7–cysteine 60, cysteine 21–cysteine 49, cysteine 30–cysteine 82, and cysteine 50–cysteine 101.

This sequence belongs to the protease inhibitor I6 (cereal trypsin/alpha-amylase inhibitor) family.

It localises to the secreted. In terms of biological role, alpha-amylase inhibitor. The polypeptide is Alpha-amylase inhibitor 4 (Sorghum bicolor (Sorghum)).